The following is a 413-amino-acid chain: CinA-like protein (413 aa).

It belongs to the CinA family.

This Crocosphaera subtropica (strain ATCC 51142 / BH68) (Cyanothece sp. (strain ATCC 51142)) protein is CinA-like protein.